Here is an 89-residue protein sequence, read N- to C-terminus: Small ribosomal subunit protein uS15 (89 aa).

This sequence belongs to the universal ribosomal protein uS15 family. In terms of assembly, part of the 30S ribosomal subunit. Forms a bridge to the 50S subunit in the 70S ribosome, contacting the 23S rRNA.

One of the primary rRNA binding proteins, it binds directly to 16S rRNA where it helps nucleate assembly of the platform of the 30S subunit by binding and bridging several RNA helices of the 16S rRNA. In terms of biological role, forms an intersubunit bridge (bridge B4) with the 23S rRNA of the 50S subunit in the ribosome. This is Small ribosomal subunit protein uS15 from Pseudomonas aeruginosa (strain LESB58).